The following is a 236-amino-acid chain: Repetitive proline-rich cell wall protein (236 aa).

A signal peptide spans 1 to 22 (MASSNFLVLLLFALFVIPQGLA). 41 consecutive repeat copies span residues 27–31 (PPVYQ), 32–36 (PPVYK), 37–41 (PPVEK), 42–46 (PPVYK), 47–51 (PPVEK), 52–56 (PPVYK), 57–61 (PPVYK), 62–66 (PPVEK), 67–71 (PPVYK), 72–76 (PPVVK), 77–81 (PPVYK), 82–86 (PPVYK), 87–91 (PPVYK), 92–96 (PPVEK), 97–101 (PPVYK), 102–106 (PPVYK), 107–111 (PPVYK), 112–116 (PPVVK), 117–121 (PPVYK), 122–126 (PPVYK), 127–131 (PPVEK), 132–136 (PPVYK), 137–141 (PPVYK), 142–146 (PPVEK), 147–151 (PPVYK), 152–156 (PPVEK), 157–161 (PPVYK), 162–166 (PPVYK), 167–171 (PPVYK), 172–176 (PPVVK), 177–181 (PPVYK), 182–186 (PPVYK), 187–191 (PPVYK), 192–196 (PPVEK), 197–201 (PPVYK), 202–206 (PPVYK), 207–211 (PPVEK), 212–216 (PPVYK), 217–221 (PPVYK), 222–226 (PPVEK), and 227–231 (PPVYG). The tract at residues 27–236 (PPVYQPPVYK…PPVYGPPHHP (210 aa)) is 42 X 5 AA approximate tandem repeats of P-P-V-[EYV]-[KQG]. The disordered stretch occupies residues 143-177 (PVEKPPVYKPPVEKPPVYKPPVYKPPVYKPPVVKP). The segment at 204-236 (VYKPPVEKPPVYKPPVYKPPVEKPPVYGPPHHP) is disordered. One copy of the 42; approximate repeat lies at 232–236 (PPHHP).

It belongs to the plant proline-rich protein superfamily. ENOD12 family.

It is found in the secreted. Its subcellular location is the cell wall. This is a developmentally regulated putative cell wall protein. The polypeptide is Repetitive proline-rich cell wall protein (PRP) (Medicago sativa (Alfalfa)).